The primary structure comprises 456 residues: Riboflavin transporter RibZ (456 aa).

14 helical membrane passes run 5–25, 45–65, 78–98, 105–125, 134–154, 158–178, 192–212, 220–240, 260–280, 289–309, 321–341, 343–363, 385–405, and 428–448; these read WIVL…GSIL, WVVT…GKLG, FFIF…STLI, AVGA…AFPA, ITGA…GIIL, GWPS…FLGI, SFDI…LLAM, LYLG…EVKF, IIGV…PFYL, MMAG…APIA, ILTA…LLKA, SPLY…GAFS, FLAT…SSFF, and QSYW…VFFM.

Belongs to the major facilitator superfamily.

Its subcellular location is the cell membrane. Transports riboflavin into the cell. This chain is Riboflavin transporter RibZ, found in Clostridioides difficile (strain 630) (Peptoclostridium difficile).